The following is a 441-amino-acid chain: MSQLQSLRGMVDLLPEQTRRWQAVEAVARDHFRRAGVEEIRTPLLEVTELFARGIGEGTDVVGKEMYSFLDRGERSCTLRPEGTASVVRAAMQHGLLNQGAQKLWYAGPMFRYERPQAGRQRQFHQIGVECLGVSSARSDVEAIALAWDLLAALGVQGLELEINSLGTPEDRQCYRAELVAWLEARRDQLDADSQQRLTTNPLRILDSKNKATQALLADAPTLLEALSPESAQRFAQVQALLHQLGIPFKLNTRLVRGLDYYGHTAFEITSDQLGAQATVCGGGRYDGLVEQLGGPATPAIGWALGMERLLLVLEAAAKADPAGAAAQLTMSAPPEVYVVNRGEAAEAVALSLTRSLRLAGVAVELDGSGAAFGKQFKRADRSGAPWAAVIGDEEAASGVVCLKPLLREGGDQRLPLSDPAAIVTILHSAPKSSLESEEER.

Belongs to the class-II aminoacyl-tRNA synthetase family. In terms of assembly, homodimer.

The protein resides in the cytoplasm. The catalysed reaction is tRNA(His) + L-histidine + ATP = L-histidyl-tRNA(His) + AMP + diphosphate + H(+). In Synechococcus sp. (strain WH7803), this protein is Histidine--tRNA ligase.